We begin with the raw amino-acid sequence, 437 residues long: Glutamyl-tRNA reductase (437 aa).

Substrate contacts are provided by residues 49 to 52, S109, 114 to 116, and Q120; these read TCNR and EGQ. C50 functions as the Nucleophile in the catalytic mechanism. Residue 198–203 participates in NADP(+) binding; the sequence is GAGRMS.

It belongs to the glutamyl-tRNA reductase family. In terms of assembly, homodimer.

It catalyses the reaction (S)-4-amino-5-oxopentanoate + tRNA(Glu) + NADP(+) = L-glutamyl-tRNA(Glu) + NADPH + H(+). Its pathway is porphyrin-containing compound metabolism; protoporphyrin-IX biosynthesis; 5-aminolevulinate from L-glutamyl-tRNA(Glu): step 1/2. It functions in the pathway porphyrin-containing compound metabolism; chlorophyll biosynthesis. Catalyzes the NADPH-dependent reduction of glutamyl-tRNA(Glu) to glutamate 1-semialdehyde (GSA). The sequence is that of Glutamyl-tRNA reductase from Prochlorococcus marinus (strain SARG / CCMP1375 / SS120).